A 61-amino-acid polypeptide reads, in one-letter code: Beta-insect depressant toxin BotIT5 (61 aa).

In terms of domain architecture, LCN-type CS-alpha/beta spans 1–61 (DGYIRKRDGC…TWKSETNTCG (61 aa)). Cystine bridges form between Cys-10–Cys-60, Cys-14–Cys-35, Cys-21–Cys-42, and Cys-25–Cys-44. Gly-61 bears the Glycine amide mark.

It belongs to the long (4 C-C) scorpion toxin superfamily. Sodium channel inhibitor family. Beta subfamily. Expressed by the venom gland.

The protein localises to the secreted. Depressant insect beta-toxins cause a transient contraction paralysis followed by a slow flaccid paralysis. They bind voltage-independently at site-4 of sodium channels (Nav) and shift the voltage of activation toward more negative potentials thereby affecting sodium channel activation and promoting spontaneous and repetitive firing. This toxin is active only on insects. The chain is Beta-insect depressant toxin BotIT5 from Buthus occitanus tunetanus (Common European scorpion).